Consider the following 196-residue polypeptide: Large ribosomal subunit protein bL9 (196 aa).

This sequence belongs to the bacterial ribosomal protein bL9 family.

Functionally, binds to the 23S rRNA. The protein is Large ribosomal subunit protein bL9 of Bradyrhizobium sp. (strain ORS 278).